Reading from the N-terminus, the 178-residue chain is CDP-archaeol synthase (178 aa).

The next 5 membrane-spanning stretches (helical) occupy residues 3 to 23 (LLLLLFSALWYILPAYVANAV), 56 to 76 (FFGILFGIITGILQHFIVILY), 91 to 111 (IILSFLLATGALFGDMLGSFI), 131 to 151 (FIIFALLFAYSLYPVPANIIV), and 152 to 172 (LLLVISPIIHFSSNIIAYKLH).

This sequence belongs to the CDP-archaeol synthase family. Mg(2+) serves as cofactor.

Its subcellular location is the cell membrane. It carries out the reaction 2,3-bis-O-(geranylgeranyl)-sn-glycerol 1-phosphate + CTP + H(+) = CDP-2,3-bis-O-(geranylgeranyl)-sn-glycerol + diphosphate. The protein operates within membrane lipid metabolism; glycerophospholipid metabolism. In terms of biological role, catalyzes the formation of CDP-2,3-bis-(O-geranylgeranyl)-sn-glycerol (CDP-archaeol) from 2,3-bis-(O-geranylgeranyl)-sn-glycerol 1-phosphate (DGGGP) and CTP. This reaction is the third ether-bond-formation step in the biosynthesis of archaeal membrane lipids. This chain is CDP-archaeol synthase, found in Methanococcus maripaludis (strain DSM 14266 / JCM 13030 / NBRC 101832 / S2 / LL).